A 258-amino-acid chain; its full sequence is Ubiquinone/menaquinone biosynthesis C-methyltransferase UbiE (258 aa).

Positions 1-20 are disordered; it reads MSESRTSADGGMETSYGFRE. Residues threonine 81, aspartate 102, and 130-131 contribute to the S-adenosyl-L-methionine site; that span reads NA.

The protein belongs to the class I-like SAM-binding methyltransferase superfamily. MenG/UbiE family.

The enzyme catalyses a 2-demethylmenaquinol + S-adenosyl-L-methionine = a menaquinol + S-adenosyl-L-homocysteine + H(+). It catalyses the reaction a 2-methoxy-6-(all-trans-polyprenyl)benzene-1,4-diol + S-adenosyl-L-methionine = a 5-methoxy-2-methyl-3-(all-trans-polyprenyl)benzene-1,4-diol + S-adenosyl-L-homocysteine + H(+). The protein operates within quinol/quinone metabolism; menaquinone biosynthesis; menaquinol from 1,4-dihydroxy-2-naphthoate: step 2/2. It participates in cofactor biosynthesis; ubiquinone biosynthesis. Functionally, methyltransferase required for the conversion of demethylmenaquinol (DMKH2) to menaquinol (MKH2) and the conversion of 2-polyprenyl-6-methoxy-1,4-benzoquinol (DDMQH2) to 2-polyprenyl-3-methyl-6-methoxy-1,4-benzoquinol (DMQH2). The protein is Ubiquinone/menaquinone biosynthesis C-methyltransferase UbiE of Rhizobium etli (strain ATCC 51251 / DSM 11541 / JCM 21823 / NBRC 15573 / CFN 42).